Reading from the N-terminus, the 350-residue chain is Phosphotriesterase-related protein (350 aa).

The a divalent metal cation site is built by histidine 22, histidine 24, glutamate 169, histidine 201, histidine 230, and aspartate 298.

This sequence belongs to the metallo-dependent hydrolases superfamily. Phosphotriesterase family. The cofactor is a divalent metal cation.

This chain is Phosphotriesterase-related protein, found in Drosophila willistoni (Fruit fly).